The sequence spans 237 residues: Probable septum site-determining protein MinC (237 aa).

The protein belongs to the MinC family. In terms of assembly, interacts with MinD and FtsZ.

Functionally, cell division inhibitor that blocks the formation of polar Z ring septums. Rapidly oscillates between the poles of the cell to destabilize FtsZ filaments that have formed before they mature into polar Z rings. Prevents FtsZ polymerization. This chain is Probable septum site-determining protein MinC, found in Buchnera aphidicola subsp. Acyrthosiphon pisum (strain 5A).